The chain runs to 600 residues: Ligand-dependent nuclear receptor corepressor-like protein (600 aa).

Disordered regions lie at residues 1-24, 102-122, and 495-519; these read MEKG…QCRS, SVIG…GQSN, and DGTS…KRGR. The segment covering 104 to 122 has biased composition (polar residues); sequence IGSSQSTPTEELSSQGQSN. Residues 514–566 enclose the HTH psq-type domain; the sequence is RKKRGRYRQYDHEIMEEAIAMVMSGKMSVSKAQGIYGVPHSTLEYKVKERSGT. The H-T-H motif DNA-binding region spans 542-562; sequence VSKAQGIYGVPHSTLEYKVKE. The interval 581–600 is disordered; sequence GLFNMTDSGTGSCKTSSKPV. The span at 583–600 shows a compositional bias: polar residues; that stretch reads FNMTDSGTGSCKTSSKPV.

It localises to the nucleus. Its function is as follows. May act as transcription activator that binds DNA elements with the sequence 5'-CCCTATCGATCGATCTCTACCT-3'. The polypeptide is Ligand-dependent nuclear receptor corepressor-like protein (LCORL) (Gallus gallus (Chicken)).